The sequence spans 310 residues: Cytochrome f (310 aa).

Residues Met-1–Ala-23 form the signal peptide. Heme-binding residues include Tyr-28, Cys-48, Cys-51, and His-52. Residues Ile-277–Lys-297 form a helical membrane-spanning segment.

It belongs to the cytochrome f family. As to quaternary structure, the 4 large subunits of the cytochrome b6-f complex are cytochrome b6, subunit IV (17 kDa polypeptide, PetD), cytochrome f and the Rieske protein, while the 4 small subunits are PetG, PetL, PetM and PetN. The complex functions as a dimer. The cofactor is heme.

It is found in the cellular thylakoid membrane. Component of the cytochrome b6-f complex, which mediates electron transfer between photosystem II (PSII) and photosystem I (PSI), cyclic electron flow around PSI, and state transitions. The chain is Cytochrome f from Prochlorococcus marinus (strain MIT 9313).